Here is a 433-residue protein sequence, read N- to C-terminus: CinA-like protein (433 aa).

This sequence belongs to the CinA family.

The polypeptide is CinA-like protein (Prochlorococcus marinus subsp. pastoris (strain CCMP1986 / NIES-2087 / MED4)).